The sequence spans 459 residues: Putrescine aminotransferase (459 aa).

Pyridoxal 5'-phosphate-binding positions include 150–151 and Q274; that span reads GT. At K300 the chain carries N6-(pyridoxal phosphate)lysine. A pyridoxal 5'-phosphate-binding site is contributed by T332.

The protein belongs to the class-III pyridoxal-phosphate-dependent aminotransferase family. Putrescine aminotransferase subfamily. Requires pyridoxal 5'-phosphate as cofactor.

It carries out the reaction an alkane-alpha,omega-diamine + 2-oxoglutarate = an omega-aminoaldehyde + L-glutamate. The enzyme catalyses putrescine + 2-oxoglutarate = 1-pyrroline + L-glutamate + H2O. The catalysed reaction is cadaverine + 2-oxoglutarate = 5-aminopentanal + L-glutamate. It functions in the pathway amine and polyamine degradation; putrescine degradation; 4-aminobutanal from putrescine (transaminase route): step 1/1. Catalyzes the aminotransferase reaction from putrescine to 2-oxoglutarate, leading to glutamate and 4-aminobutanal, which spontaneously cyclizes to form 1-pyrroline. This is the first step in one of two pathways for putrescine degradation, where putrescine is converted into 4-aminobutanoate (gamma-aminobutyrate or GABA) via 4-aminobutanal. Also functions as a cadaverine transaminase in a a L-lysine degradation pathway to succinate that proceeds via cadaverine, glutarate and L-2-hydroxyglutarate. This is Putrescine aminotransferase from Escherichia coli O81 (strain ED1a).